The primary structure comprises 333 residues: Sphingomyelinase C (333 aa).

The N-terminal stretch at 1–26 is a signal peptide; it reads MKGKLLKGVLSLGVGLGALYSGTSAQ. Residues C150 and C186 are joined by a disulfide bond.

It belongs to the neutral sphingomyelinase family. Mg(2+) serves as cofactor. In terms of processing, the N-terminus is blocked.

The protein resides in the secreted. The catalysed reaction is a sphingomyelin + H2O = phosphocholine + an N-acylsphing-4-enine + H(+). Activated by cobalt and manganese ions. Functionally, required, with sphingomyelinase, to effect target cell lysis (hemolysis). The sequence is that of Sphingomyelinase C (cerB) from Bacillus cereus.